A 300-amino-acid chain; its full sequence is Merozoite surface protein 2 (300 aa).

The signal sequence occupies residues 1-20; the sequence is MKVIKTLSIINFFIFVTFNI. N-linked (GlcNAc...) asparagine glycosylation is found at asparagine 22 and asparagine 36. The segment at 44–226 is polymorphic region; it reads EESKPPTGAV…EQTESPELQS (183 aa). The stretch at 51–58 is one 1; inverted repeat; it reads GAVAGSGA. A 7 X 8 AA tandem repeats of G-S-G-A-G-A-V-A region spans residues 51 to 74; it reads GAVAGSGAGAGSGAGAVAGSGAGA. 5 consecutive repeat copies span residues 61–68, 69–76, 77–84, 85–92, and 93–100. Residues 103 to 110 form a 7; inverted repeat; the sequence is GAVAGSGA. Residues 111-261 are disordered; the sequence is GNGANPGADA…DSQKECTDGN (151 aa). Residues 124 to 148 are compositionally biased toward low complexity; the sequence is PSTPATTTTTTTTNDAEASTSTSSE. Basic and acidic residues predominate over residues 149-165; it reads NRNHNNAETNPKGKGEV. Polar residues-rich tracts occupy residues 167 to 193 and 200 to 228; these read KPNQ…NVPR and KSPT…QSAP. An N-linked (GlcNAc...) asparagine glycan is attached at asparagine 177. N-linked (GlcNAc...) asparagine glycosylation occurs at asparagine 249. Cysteine 257 and cysteine 265 are oxidised to a cystine. 2 N-linked (GlcNAc...) asparagine glycosylation sites follow: asparagine 273 and asparagine 274. Residue asparagine 274 is the site of GPI-anchor amidated asparagine attachment. A propeptide spans 275 to 300 (removed in mature form); that stretch reads SSNIASINKFVVLISATLVLSFAIFI.

It is found in the cell membrane. In terms of biological role, may play a role in the merozoite attachment to the erythrocyte. The protein is Merozoite surface protein 2 of Plasmodium falciparum (isolate mad71 / Papua New Guinea).